The following is a 271-amino-acid chain: MKLAERTAADLRFARAGAHTVLTRRRHRWPFVIGRVFADPQDPGLGTLTLQNAAGTVIPGDVIRQRIEVVDGGRAAVNGQGATLISGVPGGDASAEETELYVDAHSWLRFDPAPRILTAHARHRQRTEVCVAHRGCAVVVDAVVLHPDLDAATFGSIESTVTVRSPGGALLAMDAQVLDAPPVTGRFTAFGTVYFVGAGFTGGHHEGPTDPPGVYTAVTELPNGAGCAVRIAAADGGTLRTYLRLLSAETAFQRASTRTFTDGMPFRRSQV.

It belongs to the UreD family. UreD, UreF and UreG form a complex that acts as a GTP-hydrolysis-dependent molecular chaperone, activating the urease apoprotein by helping to assemble the nickel containing metallocenter of UreC. The UreE protein probably delivers the nickel.

The protein localises to the cytoplasm. In terms of biological role, required for maturation of urease via the functional incorporation of the urease nickel metallocenter. The sequence is that of Urease accessory protein UreD from Mycolicibacterium smegmatis (strain ATCC 700084 / mc(2)155) (Mycobacterium smegmatis).